The following is a 352-amino-acid chain: UPF0252 protein MJ1282 (352 aa).

Belongs to the UPF0252 family.

This chain is UPF0252 protein MJ1282, found in Methanocaldococcus jannaschii (strain ATCC 43067 / DSM 2661 / JAL-1 / JCM 10045 / NBRC 100440) (Methanococcus jannaschii).